The chain runs to 407 residues: Arrestin domain-containing protein 2 (407 aa).

This sequence belongs to the arrestin family. Interacts with WWP1 (via WW domains).

This is Arrestin domain-containing protein 2 (Arrdc2) from Mus musculus (Mouse).